Here is a 382-residue protein sequence, read N- to C-terminus: MSAWVLPDHIADVLPSEARHIEELRRSLLDTARCYGYELVMPPLLEHLESLLTGAGAALDLQTFKLVDQLSGRMMGLRADSTPQVARIDAHLLNRPGVTRLCYCGPVLHTRPGAPHASREPLQFGAEIYGHAGLEADLEILMLALDCLKVVKVASPSVDLADARIVHALLKGVPVEIALAEQIYAALAAKDASELAVLTKKFPSSSRQGLLALVQLYGDEKVLLEAEKALQPLPAITESLSNLKWLASQLDGAKVSFDLADLRGYAYYTGTRFSIYAAGASDALVRGGRYDEVGAVFGRNRPAAGFSLDVKALVGVLPARPLRAAIRAPWREAADLRVAIASLRAQGETVVCVLPGHESEVDEFRCDRELVPRNGQWIVASI.

The protein belongs to the class-II aminoacyl-tRNA synthetase family. HisZ subfamily. Heteromultimer composed of HisG and HisZ subunits.

The protein localises to the cytoplasm. It participates in amino-acid biosynthesis; L-histidine biosynthesis; L-histidine from 5-phospho-alpha-D-ribose 1-diphosphate: step 1/9. Functionally, required for the first step of histidine biosynthesis. May allow the feedback regulation of ATP phosphoribosyltransferase activity by histidine. This chain is ATP phosphoribosyltransferase regulatory subunit, found in Albidiferax ferrireducens (strain ATCC BAA-621 / DSM 15236 / T118) (Rhodoferax ferrireducens).